Reading from the N-terminus, the 548-residue chain is Membrane protein insertase YidC (548 aa).

The chain crosses the membrane as a helical span at residues 6-26; the sequence is NLLVIALLFVSFMIWQAWEQD. The segment at 28 to 56 is disordered; that stretch reads NPQPQTQQTTQTTTTAAGSAADQGVPASG. A compositionally biased stretch (low complexity) spans 29 to 42; that stretch reads PQPQTQQTTQTTTT. 4 consecutive transmembrane segments (helical) span residues 350–370, 424–444, 458–478, and 499–519; these read FVGN…GIMY, FPLI…MGSI, LSAQ…MFFI, and PVIF…YYIV.

The protein belongs to the OXA1/ALB3/YidC family. Type 1 subfamily. Interacts with the Sec translocase complex via SecD. Specifically interacts with transmembrane segments of nascent integral membrane proteins during membrane integration.

It localises to the cell inner membrane. Functionally, required for the insertion and/or proper folding and/or complex formation of integral membrane proteins into the membrane. Involved in integration of membrane proteins that insert both dependently and independently of the Sec translocase complex, as well as at least some lipoproteins. Aids folding of multispanning membrane proteins. The protein is Membrane protein insertase YidC of Salmonella choleraesuis (strain SC-B67).